We begin with the raw amino-acid sequence, 1146 residues long: Transcription-repair-coupling factor (1146 aa).

The region spanning 617–778 is the Helicase ATP-binding domain; the sequence is DMCQPKAMDR…MNGIRDLSII (162 aa). Residue 630-637 coordinates ATP; the sequence is GDVGFGKT. The DEEH box motif lies at 731-734; that stretch reads DEEH. The region spanning 800 to 953 is the Helicase C-terminal domain; the sequence is VREAILREIL…GFILATHDLE (154 aa).

It in the N-terminal section; belongs to the UvrB family. The protein in the C-terminal section; belongs to the helicase family. RecG subfamily.

Its subcellular location is the cytoplasm. In terms of biological role, couples transcription and DNA repair by recognizing RNA polymerase (RNAP) stalled at DNA lesions. Mediates ATP-dependent release of RNAP and its truncated transcript from the DNA, and recruitment of nucleotide excision repair machinery to the damaged site. The sequence is that of Transcription-repair-coupling factor from Haemophilus influenzae (strain ATCC 51907 / DSM 11121 / KW20 / Rd).